The primary structure comprises 403 residues: Probable eukaryotic initiation factor 4A (403 aa).

The segment at 1-29 (MSQQDRVAPQDQDSFLDDQPGVRPIPSFD) is disordered. Positions 26 to 54 (PSFDDMPLHQNLLRGIYSYGFEKPSSIQQ) match the Q motif motif. The region spanning 57 to 230 (IAPFTRGGDI…KKFMRDPVRI (174 aa)) is the Helicase ATP-binding domain. 70 to 77 (AQSGTGKT) provides a ligand contact to ATP. Residues 178-181 (DEAD) carry the DEAD box motif. A Helicase C-terminal domain is found at 241-401 (GIKQFFIAVE…ELPVDFAAYL (161 aa)).

It belongs to the DEAD box helicase family. eIF4A subfamily. In terms of assembly, eIF4F is a multi-subunit complex, the composition of which varies with external and internal environmental conditions. It is composed of at least EIF4A, EIF4E and EIF4G.

The catalysed reaction is ATP + H2O = ADP + phosphate + H(+). In terms of biological role, ATP-dependent RNA helicase which is a subunit of the eIF4F complex involved in cap recognition and is required for mRNA binding to ribosome. In the current model of translation initiation, eIF4A unwinds RNA secondary structures in the 5'-UTR of mRNAs which is necessary to allow efficient binding of the small ribosomal subunit, and subsequent scanning for the initiator codon. The polypeptide is Probable eukaryotic initiation factor 4A (Leishmania braziliensis).